Consider the following 267-residue polypeptide: Thiazole synthase (267 aa).

The active-site Schiff-base intermediate with DXP is the Lys-101. Residues Gly-162, 188–189 (AG), and 210–211 (NT) each bind 1-deoxy-D-xylulose 5-phosphate. A disordered region spans residues 247–267 (HASPSSPAAGVPCLPDPEVPV).

It belongs to the ThiG family. In terms of assembly, homotetramer. Forms heterodimers with either ThiH or ThiS.

The protein resides in the cytoplasm. It carries out the reaction [ThiS sulfur-carrier protein]-C-terminal-Gly-aminoethanethioate + 2-iminoacetate + 1-deoxy-D-xylulose 5-phosphate = [ThiS sulfur-carrier protein]-C-terminal Gly-Gly + 2-[(2R,5Z)-2-carboxy-4-methylthiazol-5(2H)-ylidene]ethyl phosphate + 2 H2O + H(+). The protein operates within cofactor biosynthesis; thiamine diphosphate biosynthesis. In terms of biological role, catalyzes the rearrangement of 1-deoxy-D-xylulose 5-phosphate (DXP) to produce the thiazole phosphate moiety of thiamine. Sulfur is provided by the thiocarboxylate moiety of the carrier protein ThiS. In vitro, sulfur can be provided by H(2)S. The polypeptide is Thiazole synthase (Deinococcus geothermalis (strain DSM 11300 / CIP 105573 / AG-3a)).